We begin with the raw amino-acid sequence, 882 residues long: ABC transporter H family member 4 (882 aa).

The next 3 membrane-spanning stretches (helical) occupy residues 4 to 24, 35 to 55, and 79 to 101; these read WIKL…ISVF, LLFK…LLPW, and TNGP…YAIL. The ABC transporter domain maps to 384–863; the sequence is FSYENKFSSE…NAQVYYKLLG (480 aa). 418-425 serves as a coordination point for ATP; it reads GQNRSGKS. 3 disordered regions span residues 522–617, 634–669, and 710–730; these read FDPD…YSTI, SMSQ…NSGV, and NSGG…NQRS. 2 stretches are compositionally biased toward low complexity: residues 528-617 and 647-667; these read IPPT…YSTI and NGNN…INNS. Residues 715–724 show a composition bias toward acidic residues; that stretch reads DESDDDDEEA.

The protein belongs to the ABC transporter superfamily. ABCH family.

It is found in the membrane. This Dictyostelium discoideum (Social amoeba) protein is ABC transporter H family member 4 (abcH4).